Consider the following 315-residue polypeptide: ATP synthase gamma chain (315 aa).

In terms of assembly, F-type ATPases have 2 components, CF(1) - the catalytic core - and CF(0) - the membrane proton channel. CF(1) has five subunits: alpha(3), beta(3), gamma(1), delta(1), epsilon(1). CF(0) has four main subunits: a(1), b(1), b'(1) and c(9-12).

The protein localises to the cellular thylakoid membrane. Functionally, produces ATP from ADP in the presence of a proton gradient across the membrane. The gamma chain is believed to be important in regulating ATPase activity and the flow of protons through the CF(0) complex. Its function is as follows. The complex from the organism is particularly stable to disruption and remains functional after 6 hrs at 55 degrees Celsius. The sequence is that of ATP synthase gamma chain from Thermosynechococcus vestitus (strain NIES-2133 / IAM M-273 / BP-1).